We begin with the raw amino-acid sequence, 338 residues long: Trans-enoyl reductase fsr4 (338 aa).

65 to 68 (KDWK) serves as a coordination point for NADP(+). 147–153 (AAFTAAC) is a binding site for substrate. NADP(+) is bound by residues 182-185 (SSAV), 205-208 (AGRA), Y227, and 277-278 (II).

It belongs to the zinc-containing alcohol dehydrogenase family.

In terms of biological role, trans-enoyl reductase; part of the gene cluster that mediates the biosynthesis of fusarubins, highly pigmented naphthoquinones responsible for the coloration of the fruiting bodies. The non-reducing polyketide synthase FSR1 is responsible for the condensation of seven acetyl-CoA units to yield a haptaketide. After rings A and B are formed by aldol-type cyclization, the PKS-derived product is released as 6-O-demethylfusarubinaldehyde. Then, two hydroxyl groups at C-5 and C-10 are incorporated by FSR3, and simultaneously hydroxyl groups at C-6 and C-8 are methylated by FSR2. The aldehyde is, on the one hand, reduced by FSR3 to 8-O-methylfusarubin alcohol, which equilibrates mainly with 8-O-methylfusarubin and only small amounts of 8-O-methylnectriafurone. On the other hand, the aldehyde can be oxidized to form 8-O-methylfusarubinic acid, a reaction driven by FSR3 equilibrating with 8-O-methylfusarubinlactone, finally resulting in 8-O-methylanhydrofusarubinlactol after a further reduction step and loss of water. 8-O-Methylfusarubinic acid can also undergo decarboxylation, resulting in 8-O-methyl-13-hydroxynorjavanicin after another hydroxylation step at C-13. Both steps are most likely also accomplished by FSR3. No enzymatic function has been determined so far for either FSR4 and FSR5. Their deletion does not alter the product spectrum, but the possibility that they catalyze specific enzymatic steps during perithecium development cannot be ruled out. FSR4 might possess a regulatory function in the biosynthesis of fusarubins. The protein is Trans-enoyl reductase fsr4 of Gibberella fujikuroi (strain CBS 195.34 / IMI 58289 / NRRL A-6831) (Bakanae and foot rot disease fungus).